Here is a 1068-residue protein sequence, read N- to C-terminus: Huntingtin-interacting protein 1-related protein (1068 aa).

At methionine 1 the chain carries N-acetylmethionine. Residues 23–151 form the ENTH domain; it reads EREQFDKTQA…SFHLKHPQFP (129 aa). Residues 346 to 644 are a coiled coil; the sequence is GSMKDDRDLQ…LQDAVSKLDD (299 aa). Positions 582 to 610 are disordered; that stretch reads EALSQEQQRSSQEKGELRGQLAEKESQEQ. A compositionally biased stretch (basic and acidic residues) spans 592-608; the sequence is SQEKGELRGQLAEKESQ. The region spanning 771–1012 is the I/LWEQ domain; it reads SLDVRQEELG…ELRKQHYVLA (242 aa). An important for actin binding region spans residues 867 to 924; it reads RWTEGLISASKAVGWGATQLVESADKVVLHMGKYEELIVCSHEIAASTAQLVAASKVK. Residues 1011–1068 form a disordered region; it reads LAGGMGTPSEEEPSRPSPAPRSGATKKPPLAQKPSIAPRTDNQLDKKDGVYPAQLVNY.

Belongs to the SLA2 family. In terms of assembly, homodimer. Interacts with actin; homodimerization promotes actin binding. Interacts with CLTB. Interacts with HIP1. Interacts (via ENTH and I/LWEQ domains) with BCL2L10. Widely expressed. Expressed at lower levels in skeletal muscle and heart. The level of expression does not change appreciably during development.

It localises to the cytoplasm. The protein resides in the perinuclear region. The protein localises to the endomembrane system. It is found in the cytoplasmic vesicle. Its subcellular location is the clathrin-coated vesicle membrane. Functionally, component of clathrin-coated pits and vesicles, that may link the endocytic machinery to the actin cytoskeleton. Binds 3-phosphoinositides (via ENTH domain). May act through the ENTH domain to promote cell survival by stabilizing receptor tyrosine kinases following ligand-induced endocytosis. The protein is Huntingtin-interacting protein 1-related protein (Hip1r) of Mus musculus (Mouse).